A 299-amino-acid chain; its full sequence is RING-H2 finger protein ATL20 (299 aa).

A helical transmembrane segment spans residues 172-192; sequence LIITLCIIGGITATCIAAIRI. The RING-type; atypical zinc finger occupies 253 to 295; sequence CPICLSEYASKETVRCMPECDHCFHVQCIDEWLKIHSSCPVCR.

Belongs to the RING-type zinc finger family. ATL subfamily.

The protein resides in the membrane. It catalyses the reaction S-ubiquitinyl-[E2 ubiquitin-conjugating enzyme]-L-cysteine + [acceptor protein]-L-lysine = [E2 ubiquitin-conjugating enzyme]-L-cysteine + N(6)-ubiquitinyl-[acceptor protein]-L-lysine.. The protein operates within protein modification; protein ubiquitination. The chain is RING-H2 finger protein ATL20 (ATL20) from Arabidopsis thaliana (Mouse-ear cress).